Consider the following 282-residue polypeptide: NH(3)-dependent NAD(+) synthetase (282 aa).

Position 51–58 (51–58) interacts with ATP; the sequence is GISGGVDS. Position 57 (aspartate 57) interacts with Mg(2+). Arginine 148 contributes to the deamido-NAD(+) binding site. Threonine 168 is an ATP binding site. Position 173 (glutamate 173) interacts with Mg(2+). 2 residues coordinate deamido-NAD(+): lysine 181 and aspartate 188. Positions 197 and 219 each coordinate ATP. 268 to 269 is a binding site for deamido-NAD(+); sequence HK.

It belongs to the NAD synthetase family. As to quaternary structure, homodimer.

The enzyme catalyses deamido-NAD(+) + NH4(+) + ATP = AMP + diphosphate + NAD(+) + H(+). The protein operates within cofactor biosynthesis; NAD(+) biosynthesis; NAD(+) from deamido-NAD(+) (ammonia route): step 1/1. Functionally, catalyzes the ATP-dependent amidation of deamido-NAD to form NAD. Uses ammonia as a nitrogen source. This Burkholderia cenocepacia (strain ATCC BAA-245 / DSM 16553 / LMG 16656 / NCTC 13227 / J2315 / CF5610) (Burkholderia cepacia (strain J2315)) protein is NH(3)-dependent NAD(+) synthetase.